Here is a 239-residue protein sequence, read N- to C-terminus: Aspartate/glutamate leucyltransferase (239 aa).

It belongs to the R-transferase family. Bpt subfamily.

The protein localises to the cytoplasm. It catalyses the reaction N-terminal L-glutamyl-[protein] + L-leucyl-tRNA(Leu) = N-terminal L-leucyl-L-glutamyl-[protein] + tRNA(Leu) + H(+). The catalysed reaction is N-terminal L-aspartyl-[protein] + L-leucyl-tRNA(Leu) = N-terminal L-leucyl-L-aspartyl-[protein] + tRNA(Leu) + H(+). Functions in the N-end rule pathway of protein degradation where it conjugates Leu from its aminoacyl-tRNA to the N-termini of proteins containing an N-terminal aspartate or glutamate. The polypeptide is Aspartate/glutamate leucyltransferase (Campylobacter jejuni subsp. jejuni serotype O:2 (strain ATCC 700819 / NCTC 11168)).